The sequence spans 966 residues: Mitogen-activated protein kinase kinase kinase 13 (966 aa).

Disordered regions lie at residues 1–22 (MANF…SESK), 30–49 (ELTA…QQEK), and 90–114 (HDES…SGTE). Residues 95–113 (TAVSQGNSNTVDGESTSGT) show a composition bias toward polar residues. Residues 168–409 (ISELQWLGSG…FRQTLMHLDI (242 aa)) enclose the Protein kinase domain. ATP is bound by residues 174 to 182 (LGSGAQGAV) and Lys-195. Residue Asp-279 is the Proton acceptor of the active site. Leucine-zipper regions lie at residues 433 to 454 (VKKH…DEEL) and 486 to 507 (LSAI…EQAV). 4 disordered regions span residues 534 to 599 (KRKG…RGSH), 611 to 655 (AQEN…HHPR), 744 to 834 (DIPS…RRQR), and 846 to 908 (STFS…GLSD). Positions 567–581 (SPLSGSPKMSTSSSK) are enriched in low complexity. The span at 582-594 (SRYRSKPRHRRGN) shows a compositional bias: basic residues. 2 stretches are compositionally biased toward polar residues: residues 611–629 (AQEN…SQYP) and 785–795 (RSESSLGTSHL). The span at 814–827 (DSSEEEEGEVDSEV) shows a compositional bias: acidic residues. The interval 815–828 (SSEEEEGEVDSEVE) is acidic. A compositionally biased stretch (polar residues) spans 846 to 855 (STFSSENFSV). Over residues 873-887 (LADKLEDRLAEKLDD) the composition is skewed to basic and acidic residues.

Belongs to the protein kinase superfamily. STE Ser/Thr protein kinase family. MAP kinase kinase kinase subfamily. As to quaternary structure, homodimer; forms dimers through the leucine-zipper motif. Interacts with the C-terminus of MAPK8IP1 through the kinase catalytic domain. Binds PRDX3. Associates with the IKK complex through the kinase domain. Mg(2+) serves as cofactor. Autophosphorylated on serine and threonine residues. In terms of tissue distribution, expressed in the adult brain, liver, placenta and pancreas, with expression strongest in the pancreas.

It localises to the cytoplasm. It is found in the membrane. It catalyses the reaction L-seryl-[protein] + ATP = O-phospho-L-seryl-[protein] + ADP + H(+). The enzyme catalyses L-threonyl-[protein] + ATP = O-phospho-L-threonyl-[protein] + ADP + H(+). Activated by autophosphorylation and homodimerization. In terms of biological role, activates the JUN N-terminal pathway through activation of the MAP kinase kinase MAP2K7. Acts synergistically with PRDX3 to regulate the activation of NF-kappa-B in the cytosol. This activation is kinase-dependent and involves activating the IKK complex, the IKBKB-containing complex that phosphorylates inhibitors of NF-kappa-B. The sequence is that of Mitogen-activated protein kinase kinase kinase 13 from Homo sapiens (Human).